We begin with the raw amino-acid sequence, 391 residues long: Na(+)/H(+) antiporter NhaA (391 aa).

12 consecutive transmembrane segments (helical) span residues Phe9 to Ile29, Tyr36 to Ala56, Leu59 to Val79, Ile95 to Ile115, Val123 to Leu143, Leu154 to Phe174, Gly177 to Met197, Leu213 to Leu235, Trp259 to Gly279, Ile293 to Val313, Ile329 to Leu349, and Met364 to Ala384.

The protein belongs to the NhaA Na(+)/H(+) (TC 2.A.33) antiporter family.

It localises to the cell inner membrane. The catalysed reaction is Na(+)(in) + 2 H(+)(out) = Na(+)(out) + 2 H(+)(in). Na(+)/H(+) antiporter that extrudes sodium in exchange for external protons. The chain is Na(+)/H(+) antiporter NhaA from Pseudomonas putida (strain GB-1).